The chain runs to 179 residues: ATP synthase subunit b, chloroplastic (179 aa).

A helical membrane pass occupies residues 35–51 (IVILGGGIFKLGSTALS).

Belongs to the ATPase B chain family. As to quaternary structure, F-type ATPases have 2 components, F(1) - the catalytic core - and F(0) - the membrane proton channel. F(1) has five subunits: alpha(3), beta(3), gamma(1), delta(1), epsilon(1). F(0) has four main subunits: a(1), b(1), b'(1) and c(10-14). The alpha and beta chains form an alternating ring which encloses part of the gamma chain. F(1) is attached to F(0) by a central stalk formed by the gamma and epsilon chains, while a peripheral stalk is formed by the delta, b and b' chains.

The protein resides in the plastid. The protein localises to the chloroplast thylakoid membrane. Its function is as follows. F(1)F(0) ATP synthase produces ATP from ADP in the presence of a proton or sodium gradient. F-type ATPases consist of two structural domains, F(1) containing the extramembraneous catalytic core and F(0) containing the membrane proton channel, linked together by a central stalk and a peripheral stalk. During catalysis, ATP synthesis in the catalytic domain of F(1) is coupled via a rotary mechanism of the central stalk subunits to proton translocation. Functionally, component of the F(0) channel, it forms part of the peripheral stalk, linking F(1) to F(0). This Emiliania huxleyi (Coccolithophore) protein is ATP synthase subunit b, chloroplastic.